A 425-amino-acid chain; its full sequence is Imidazolonepropionase (425 aa).

Residues His-82 and His-84 each contribute to the Fe(3+) site. The Zn(2+) site is built by His-82 and His-84. Residues Arg-91, Tyr-154, and His-187 each contribute to the 4-imidazolone-5-propanoate site. Tyr-154 provides a ligand contact to N-formimidoyl-L-glutamate. His-253 contributes to the Fe(3+) binding site. His-253 serves as a coordination point for Zn(2+). Glu-256 provides a ligand contact to 4-imidazolone-5-propanoate. Asp-328 contributes to the Fe(3+) binding site. Residue Asp-328 coordinates Zn(2+). N-formimidoyl-L-glutamate contacts are provided by Asn-330 and Gly-332. Ser-333 contacts 4-imidazolone-5-propanoate.

This sequence belongs to the metallo-dependent hydrolases superfamily. HutI family. Requires Zn(2+) as cofactor. The cofactor is Fe(3+).

It localises to the cytoplasm. The catalysed reaction is 4-imidazolone-5-propanoate + H2O = N-formimidoyl-L-glutamate. Its pathway is amino-acid degradation; L-histidine degradation into L-glutamate; N-formimidoyl-L-glutamate from L-histidine: step 3/3. Catalyzes the hydrolytic cleavage of the carbon-nitrogen bond in imidazolone-5-propanoate to yield N-formimidoyl-L-glutamate. It is the third step in the universal histidine degradation pathway. This is Imidazolonepropionase from Symbiobacterium thermophilum (strain DSM 24528 / JCM 14929 / IAM 14863 / T).